Consider the following 199-residue polypeptide: Peptidyl-tRNA hydrolase (199 aa).

Tyr15 provides a ligand contact to tRNA. Residue His20 is the Proton acceptor of the active site. Positions 66, 68, and 114 each coordinate tRNA.

It belongs to the PTH family. Monomer.

Its subcellular location is the cytoplasm. It catalyses the reaction an N-acyl-L-alpha-aminoacyl-tRNA + H2O = an N-acyl-L-amino acid + a tRNA + H(+). Its function is as follows. Hydrolyzes ribosome-free peptidyl-tRNAs (with 1 or more amino acids incorporated), which drop off the ribosome during protein synthesis, or as a result of ribosome stalling. Catalyzes the release of premature peptidyl moieties from peptidyl-tRNA molecules trapped in stalled 50S ribosomal subunits, and thus maintains levels of free tRNAs and 50S ribosomes. This chain is Peptidyl-tRNA hydrolase, found in Burkholderia ambifaria (strain MC40-6).